The sequence spans 144 residues: Transcription antitermination protein NusB (144 aa).

The protein belongs to the NusB family.

Involved in transcription antitermination. Required for transcription of ribosomal RNA (rRNA) genes. Binds specifically to the boxA antiterminator sequence of the ribosomal RNA (rrn) operons. This chain is Transcription antitermination protein NusB, found in Leifsonia xyli subsp. xyli (strain CTCB07).